A 353-amino-acid polypeptide reads, in one-letter code: Photosystem II protein D1 (353 aa).

T2 is modified (N-acetylthreonine). T2 carries the phosphothreonine modification. 3 consecutive transmembrane segments (helical) span residues 29–46, 118–133, and 142–156; these read YIGWFGVLMIPTLLTATS, HFLLGVACYMGREWEL, and WIAVAYSAPVAAATA. H118 contacts chlorophyll a. Y126 serves as a coordination point for pheophytin a. D170 and E189 together coordinate [CaMn4O5] cluster. Residues 197 to 218 traverse the membrane as a helical segment; the sequence is FHMLGVAGVFGGSLFSAMHGSL. Residue H198 coordinates chlorophyll a. A quinone is bound by residues H215 and 264–265; that span reads SF. Residue H215 coordinates Fe cation. Residue H272 coordinates Fe cation. Residues 274–288 traverse the membrane as a helical segment; it reads FLAAWPVVGIWFTAL. The [CaMn4O5] cluster site is built by H332, E333, D342, and A344. Residues 345–353 constitute a propeptide that is removed on maturation; sequence SVEAPSTNG.

This sequence belongs to the reaction center PufL/M/PsbA/D family. In terms of assembly, PSII is composed of 1 copy each of membrane proteins PsbA, PsbB, PsbC, PsbD, PsbE, PsbF, PsbH, PsbI, PsbJ, PsbK, PsbL, PsbM, PsbT, PsbX, PsbY, PsbZ, Psb30/Ycf12, at least 3 peripheral proteins of the oxygen-evolving complex and a large number of cofactors. It forms dimeric complexes. The cofactor is The D1/D2 heterodimer binds P680, chlorophylls that are the primary electron donor of PSII, and subsequent electron acceptors. It shares a non-heme iron and each subunit binds pheophytin, quinone, additional chlorophylls, carotenoids and lipids. D1 provides most of the ligands for the Mn4-Ca-O5 cluster of the oxygen-evolving complex (OEC). There is also a Cl(-1) ion associated with D1 and D2, which is required for oxygen evolution. The PSII complex binds additional chlorophylls, carotenoids and specific lipids.. In terms of processing, tyr-161 forms a radical intermediate that is referred to as redox-active TyrZ, YZ or Y-Z. C-terminally processed by CTPA; processing is essential to allow assembly of the oxygen-evolving complex and thus photosynthetic growth.

It is found in the plastid. The protein resides in the chloroplast thylakoid membrane. It carries out the reaction 2 a plastoquinone + 4 hnu + 2 H2O = 2 a plastoquinol + O2. Functionally, photosystem II (PSII) is a light-driven water:plastoquinone oxidoreductase that uses light energy to abstract electrons from H(2)O, generating O(2) and a proton gradient subsequently used for ATP formation. It consists of a core antenna complex that captures photons, and an electron transfer chain that converts photonic excitation into a charge separation. The D1/D2 (PsbA/PsbD) reaction center heterodimer binds P680, the primary electron donor of PSII as well as several subsequent electron acceptors. This chain is Photosystem II protein D1, found in Acorus calamus (Sweet flag).